The primary structure comprises 145 residues: MGKGKPRGLNSARKLRVHRRNNRWAENNYKKRLLGTAFKSSPFGGSSHAKGIVLEKLGIESKQPNSAIRKCVRVQLIKNGKKVTAFVPNDGCLNFVDENDEVLLAGFGRKGKAKGDIPGVRFKVVKVSGVSLLALWKEKKEKPRS.

Residue proline 64 is modified to Hydroxyproline.

Belongs to the universal ribosomal protein uS12 family.

This is Small ribosomal subunit protein uS12A (RPS23A) from Naumovozyma castellii (Yeast).